Reading from the N-terminus, the 39-residue chain is Photosystem II reaction center protein L (39 aa).

Residues 18 to 38 (SLYLGLLLTFVMGILFSSYFF) traverse the membrane as a helical segment.

This sequence belongs to the PsbL family. In terms of assembly, PSII is composed of 1 copy each of membrane proteins PsbA, PsbB, PsbC, PsbD, PsbE, PsbF, PsbH, PsbI, PsbJ, PsbK, PsbL, PsbM, PsbT, PsbX, PsbY, Psb30/Ycf12, peripheral proteins PsbO, CyanoQ (PsbQ), PsbU, PsbV and a large number of cofactors. It forms dimeric complexes.

The protein localises to the cellular thylakoid membrane. Its function is as follows. One of the components of the core complex of photosystem II (PSII). PSII is a light-driven water:plastoquinone oxidoreductase that uses light energy to abstract electrons from H(2)O, generating O(2) and a proton gradient subsequently used for ATP formation. It consists of a core antenna complex that captures photons, and an electron transfer chain that converts photonic excitation into a charge separation. This subunit is found at the monomer-monomer interface and is required for correct PSII assembly and/or dimerization. This chain is Photosystem II reaction center protein L, found in Prochlorococcus marinus (strain MIT 9211).